A 1983-amino-acid chain; its full sequence is MTLPTSLCDLFAQAASRCPDNLAVDHTEGSLTYRQLDDVSNSLANMLMGLGVNQLSPVILLTSHGTFNIIATLAILKVGSCCVPIDRATWPQERINYVCQTVANSVILNTTSEPFMPSEGAGDVLNYTSMQSGPSFRPNPVFQAHKVAADDTAYIIFTSGSTGKPKGVLISHKSLCLYSTTSPINLDIGPGDRLLHILSVAFDACACMLFSALGNCGTIVPAQAEDVLLQAPSCTVLAATPAMLKNLPSPTTENSIFSNLSRVILGGETASPDLLGLWIDAGVQVLIAYGVTETTSMGSIYRVERDPRTDAINPYIIGGVLEQSPIWIVDSELRIIKNENSEGEIIVGGDGVAQGYYNDEQKTRSNFIHWNGSRIYRTGDFGCWVLDANGRRVIEFRGRKDRTVKNQGYLVNLDRDVEAALYRVGESFGLTSVRAVATGNGIVAVVTPSNVNTSALIEKAKDIMCSYCIPYRIGAVDDLPLSPNGKVQHNELAELIKIIDEGQHNQENKADSQLSEKIERGKFGDDRHLDTLLTVARDVLSLPGQSFRILQPHDSFFAVGGSSLLAFKLVSVLGQHGLNIPARELFKNQPFSDVAPLITSRAHSSTWRLTEHDDKTQQTLAELQNQACQMLGLVQNSFEIGPLTSLQLDLALPTLGDESRNINQVKIAYNAPHSGIMRRAWQGLWQSEPVFRTEVSLAVGCGALIVHNKPFRKYRVVSHSCRDKYEEAVKGINMGVGLGCTLDVLTYHKTSDGLPYLPVSSNHNSSSSETDELTVVLTIHHSLMDGESLKLLLDKVDRIALGFSQPLSGSSINANLALIKTQNSRDSEVRSFFSDYLRHLSPENIAPGQVSATENLEGSSSRETAFFETSVSSVEVSDFAKLNCSSAACIYYIAWAMAVAAFDNSPDVLIGAVVSNRPALQHHEHAIGAYMSTLPLVFNFRDDEETVVDRIQKTMEDLATVGEYAWARSDQCGIGRRMRTLLSMQFPLPNESSKPPALWTESAENSDFPLCLLVESSGDFRMLYDATQFNWEAAQRLGQHFKHALYSLHHETRVTDCMTVNRLQENLAKQSEIFRLKPSERIVKQVLEQVMGQFPSLIAVEDCLGGKLTYSELDKLTNVIAHHINSTVPNAEVIALYSDGTIQWILGLLGTVKAGCTYVNLDPRSSVSRRETICKQCGAEALLLPNASQASEAPLMDNLKVLAVDEMLSGNSKKHNGKQPDRASLDSSLVIVFTSGTTGNPKGILISNRSFLSMETSYGTTMFAAPGRRIAQFMSPVFDVCNMEIFSALLHGATLVLRDPSDPYANLHRVNTAAVTPSAMAVIDLDDFPNLQLIYACGEPVTKSLVKRYTKRALLYNAYGPAECSILTSIERLIPGDQVTVGRPLSTVRVYILDEDQHPMAPGDRGEVCVAGVQVLRDYINAPEQAARNILTDPWYPGERMYRSGDSGSIGRDGRLSLHGRIDRLVKLRGFRVELAGVEHAVVSGPTEEGVSQCAAIAVNGLLIVYVSFERSQQHDSLSNKERIAQLLSRLREQLLPSSVPQEIVHIDNFPRTINGKIDTRALETQYSSYKNTSIEKAVGDCPITRPKIEDKLAHEWRQVLQLIPETQLQESDDFFKLGGHSVSIMLLATRLTAAFGKKITVRELLPSPTFKDQINMVRALLEIETFHKEEPQMLPPLLTEELTSIEKQVWFQHQVATTVTAFNIIRVIQIEGAVEIDKLCQSLNNILSIDPIFRSNIVEGPKGPARILRNSAPTVQEVDEFDIERALHHRFNLAHDYLIQVYLARHGCKGDNNDHATLVILTSHVIADLGTLQNFLQLTSTAYSGSTLVPLDRPKHLDSKSWTRIPTFSERKFWSEYLKGLIRRLGLTHHQLALAVGALFLQWFSAEDDLVLGAPNSGRPTSQEQESLGQFLDRLPIRITPNDLGNDDTMTKLTEILNRVRHSSLKALSNAISFSNIIQDLGYPSGGLEHPLFECDCFYTVS.

Positions 11 to 405 (FAQAASRCPD…FRGRKDRTVK (395 aa)) are adenylation 1. The Carrier 1 domain maps to 526 to 602 (DRHLDTLLTV…DVAPLITSRA (77 aa)). Ser-563 bears the O-(pantetheine 4'-phosphoryl)serine mark. The interval 769 to 1047 (ETDELTVVLT…GQHFKHALYS (279 aa)) is condensation 1. An adenylation 2 region spans residues 1089–1469 (QVMGQFPSLI…GRIDRLVKLR (381 aa)). The Carrier 2 domain maps to 1584 to 1662 (ITRPKIEDKL…DQINMVRALL (79 aa)). Ser-1622 carries the post-translational modification O-(pantetheine 4'-phosphoryl)serine. Residues 1652–1976 (KDQINMVRAL…GGLEHPLFEC (325 aa)) are condensation 2.

This sequence belongs to the NRP synthetase family.

Its pathway is mycotoxin biosynthesis. Nonribosomal peptide synthetase; part of the gene cluster that mediates the biosynthesis of 11'-deoxyverticillin A, one of the dimeric epipolythiodioxopiperazines (ETPs) from the verticillin family that act as mycotoxins. 11'-deoxyverticillin A is required for normal conidiation. The nonribosomal peptide synthetase verP is speculated to be responsible for condensation of amino acids to form the carbon skeleton of verticillin, whereas the cluster-specific tailoring enzymes are involved in further modifications leading to the production of 11'-deoxyverticillin A. The protein is Nonribosomal peptide synthetase verP of Clonostachys rogersoniana.